The primary structure comprises 84 residues: Defensin-like protein 140 (84 aa).

The signal sequence occupies residues 1-28 (MSKSLQLIVTVLCIFTILVLGEICLAKG). Intrachain disulfides connect Cys37/Cys81, Cys46/Cys65, Cys51/Cys75, and Cys55/Cys77.

This sequence belongs to the DEFL family.

Its subcellular location is the secreted. In Arabidopsis thaliana (Mouse-ear cress), this protein is Defensin-like protein 140 (LCR15).